The sequence spans 261 residues: Zinc import ATP-binding protein ZnuC (261 aa).

The region spanning 6-221 is the ABC transporter domain; it reads IRLEKVAVRF…PAFVELFGNN (216 aa). 38-45 contributes to the ATP binding site; that stretch reads GPNGAGKT.

This sequence belongs to the ABC transporter superfamily. Zinc importer (TC 3.A.1.15.5) family. The complex is composed of two ATP-binding proteins (ZnuC), two transmembrane proteins (ZnuB) and a solute-binding protein (ZnuA).

Its subcellular location is the cell inner membrane. It catalyses the reaction Zn(2+)(out) + ATP(in) + H2O(in) = Zn(2+)(in) + ADP(in) + phosphate(in) + H(+)(in). Functionally, part of the ABC transporter complex ZnuABC involved in zinc import. Responsible for energy coupling to the transport system. The sequence is that of Zinc import ATP-binding protein ZnuC from Pseudomonas fluorescens (strain Pf0-1).